The following is a 152-amino-acid chain: Endoribonuclease YbeY (152 aa).

3 residues coordinate Zn(2+): histidine 116, histidine 120, and histidine 126.

It belongs to the endoribonuclease YbeY family. The cofactor is Zn(2+).

The protein localises to the cytoplasm. Its function is as follows. Single strand-specific metallo-endoribonuclease involved in late-stage 70S ribosome quality control and in maturation of the 3' terminus of the 16S rRNA. The chain is Endoribonuclease YbeY from Mycoplasma mobile (strain ATCC 43663 / 163K / NCTC 11711) (Mesomycoplasma mobile).